Consider the following 465-residue polypeptide: Pancreatic triacylglycerol lipase (465 aa).

A signal peptide spans methionine 1–glycine 16. 2 cysteine pairs are disulfide-bonded: cysteine 20-cysteine 26 and cysteine 107-cysteine 118. Residue serine 169 is the Nucleophile of the active site. The Charge relay system role is filled by aspartate 193. Ca(2+) contacts are provided by glutamate 204, arginine 207, aspartate 209, and aspartate 212. An intrachain disulfide couples cysteine 254 to cysteine 278. The Charge relay system role is filled by histidine 280. 2 disulfide bridges follow: cysteine 302/cysteine 313 and cysteine 316/cysteine 321. Asparagine 351, asparagine 398, and asparagine 425 each carry an N-linked (GlcNAc...) asparagine glycan. The PLAT domain occupies tryptophan 355 to cysteine 465. Cysteine 449 and cysteine 465 are oxidised to a cystine.

Belongs to the AB hydrolase superfamily. Lipase family. As to quaternary structure, forms a 1:1 stoichiometric complex with (pro)colipase/CLPS.

It localises to the secreted. The enzyme catalyses a triacylglycerol + H2O = a diacylglycerol + a fatty acid + H(+). The catalysed reaction is 1,2,3-tributanoylglycerol + H2O = dibutanoylglycerol + butanoate + H(+). It catalyses the reaction 1,2,3-tri-(9Z-octadecenoyl)-glycerol + H2O = di-(9Z)-octadecenoylglycerol + (9Z)-octadecenoate + H(+). It carries out the reaction all-trans-retinyl hexadecanoate + H2O = all-trans-retinol + hexadecanoate + H(+). The enzyme catalyses 1,2-di-(9Z-octadecenoyl)-glycerol + H2O = (9Z-octadecenoyl)-glycerol + (9Z)-octadecenoate + H(+). With respect to regulation, inhibited by bile salts, is reactivated by (pro)colipase/CLPS. In terms of biological role, plays an important role in fat metabolism. It preferentially splits the esters of long-chain fatty acids at positions 1 and 3, producing mainly 2-monoacylglycerol and free fatty acids, and shows considerably higher activity against insoluble emulsified substrates than against soluble ones. This is Pancreatic triacylglycerol lipase (PNLIP) from Cavia porcellus (Guinea pig).